The primary structure comprises 558 residues: Adenine deaminase (558 aa).

Belongs to the metallo-dependent hydrolases superfamily. Adenine deaminase family. Mn(2+) is required as a cofactor.

It carries out the reaction adenine + H2O + H(+) = hypoxanthine + NH4(+). In Methanoregula boonei (strain DSM 21154 / JCM 14090 / 6A8), this protein is Adenine deaminase.